The following is a 230-amino-acid chain: Ribonuclease 3 (230 aa).

Positions 5–125 constitute an RNase III domain; sequence YSRFYNILGY…VIGAIYLDSD (121 aa). Glu40 contributes to the Mg(2+) binding site. Residue Asp44 is part of the active site. Mg(2+)-binding residues include Asp111 and Glu114. Glu114 is an active-site residue. Residues 153–223 form the DRBM domain; it reads DSKSKLQEIL…AEKMIEMLSQ (71 aa).

This sequence belongs to the ribonuclease III family. Homodimer. It depends on Mg(2+) as a cofactor.

It localises to the cytoplasm. It catalyses the reaction Endonucleolytic cleavage to 5'-phosphomonoester.. Its function is as follows. Digests double-stranded RNA. Involved in the processing of primary rRNA transcript to yield the immediate precursors to the large and small rRNAs (23S and 16S). Also processes some mRNAs, and tRNAs when they are encoded in the rRNA operon. CRISPR (clustered regularly interspaced short palindromic repeat) is an adaptive immune system that provides protection against mobile genetic elements (viruses, transposable elements and conjugative plasmids). CRISPR clusters contain spacers, sequences complementary to antecedent mobile elements, and target invading nucleic acids. CRISPR clusters are transcribed and processed into CRISPR RNA (crRNA). In this organism endogenous ribonuclease 3 and Cas9 are required for correct coprocessing of pre-crRNA and the trans-encoded small RNA (tracrRNA). Cas9, crRNA and tracrRNA are required for cleavage of invading DNA. Complements pre-crRNA and tracrRNA coprocessing defects in an rnc deletion in S.pyogenes strain 370. The protein is Ribonuclease 3 of Francisella tularensis subsp. novicida (strain U112).